We begin with the raw amino-acid sequence, 61 residues long: Sec-independent protein translocase protein TatA (61 aa).

Residues 1–21 traverse the membrane as a helical segment; the sequence is MFGLGITEILLILGIIILIFG.

This sequence belongs to the TatA/E family. In terms of assembly, the Tat system comprises two distinct complexes: a TatABC complex, containing multiple copies of TatA, TatB and TatC subunits, and a separate TatA complex, containing only TatA subunits. Substrates initially bind to the TatABC complex, which probably triggers association of the separate TatA complex to form the active translocon.

Its subcellular location is the cell inner membrane. Its function is as follows. Part of the twin-arginine translocation (Tat) system that transports large folded proteins containing a characteristic twin-arginine motif in their signal peptide across membranes. TatA could form the protein-conducting channel of the Tat system. This is Sec-independent protein translocase protein TatA from Maridesulfovibrio salexigens (strain ATCC 14822 / DSM 2638 / NCIMB 8403 / VKM B-1763) (Desulfovibrio salexigens).